We begin with the raw amino-acid sequence, 1013 residues long: Putative helicase mov-10-B.1 (1013 aa).

Composition is skewed to polar residues over residues 91 to 103 (QWSRPYRSQQNHA) and 113 to 123 (RPSTTRVSDPS). Residues 91–129 (QWSRPYRSQQNHATPHLNDAISRPSTTRVSDPSSVPEPE) form a disordered region. Position 550-557 (550-557 (GPPGTGKT)) interacts with ATP. Positions 672–675 (DEAG) match the DEAG box motif.

It belongs to the DNA2/NAM7 helicase family. SDE3 subfamily.

It is found in the cytoplasm. The protein localises to the P-body. It catalyses the reaction ATP + H2O = ADP + phosphate + H(+). Its function is as follows. Probable RNA helicase. Required for RNA-mediated gene silencing by the RNA-induced silencing complex (RISC). Required for both miRNA-mediated translational repression and miRNA-mediated cleavage of complementary mRNAs by RISC. In Danio rerio (Zebrafish), this protein is Putative helicase mov-10-B.1 (mov10b.1).